The following is a 458-amino-acid chain: tRNA modification GTPase MnmE (458 aa).

(6S)-5-formyl-5,6,7,8-tetrahydrofolate contacts are provided by Arg22, Glu84, and Arg123. The 160-residue stretch at 220-379 (GIATAIIGRP…LEKAIADLFF (160 aa)) folds into the TrmE-type G domain. Asn230 provides a ligand contact to K(+). GTP is bound by residues 230-235 (NVGKSS), 249-255 (TDIAGTT), and 274-277 (DTAG). Mg(2+) is bound at residue Ser234. Residues Thr249, Ile251, and Thr254 each coordinate K(+). A Mg(2+)-binding site is contributed by Thr255. A (6S)-5-formyl-5,6,7,8-tetrahydrofolate-binding site is contributed by Lys458.

It belongs to the TRAFAC class TrmE-Era-EngA-EngB-Septin-like GTPase superfamily. TrmE GTPase family. As to quaternary structure, homodimer. Heterotetramer of two MnmE and two MnmG subunits. Requires K(+) as cofactor.

The protein resides in the cytoplasm. In terms of biological role, exhibits a very high intrinsic GTPase hydrolysis rate. Involved in the addition of a carboxymethylaminomethyl (cmnm) group at the wobble position (U34) of certain tRNAs, forming tRNA-cmnm(5)s(2)U34. The protein is tRNA modification GTPase MnmE of Bacillus thuringiensis (strain Al Hakam).